The chain runs to 294 residues: Beta-lactamase SME-1 (294 aa).

A signal peptide spans 1 to 27 (MSNKVNFKTASFLFSVCLALSAFNAHA). An intrachain disulfide couples Cys-72 to Cys-242. Ser-73 acts as the Nucleophile; acyl-ester intermediate in catalysis. 4 residues coordinate a beta-lactam: Ser-73, Lys-76, Ser-133, and Asn-135. Residue Glu-172 is the Proton acceptor of the active site. Thr-239 is a binding site for a beta-lactam.

Belongs to the class-A beta-lactamase family.

The enzyme catalyses a beta-lactam + H2O = a substituted beta-amino acid. Its activity is regulated as follows. Partially inhibited by the beta-lactamase-blocking agents, clavulanic acid and tazobactam. Not inhibited by EDTA. Its function is as follows. Class A beta-lactamase which confers resistance to the beta-lactam antibiotics, including penicillins, some cephalosporins and carbapenems, to JM109 strain E.coli. Acts via hydrolysis of the beta-lactam ring. Has penicillin-, cephalosporin- and carbapenem-hydrolyzing activities. This is Beta-lactamase SME-1 from Serratia marcescens.